The chain runs to 585 residues: MITRMSELFLRTLRDDPADAEVPSHKLLIRAGYVRPVGPGLYSWLPLGLKVLRKIENIVRNEMNAIGGQEILFPALLPRAPYETTNRWTEYGDTLFRLQDRRNNDYLLGPTHEEMFTLTVKGEYSSYKDFPLRLYQIQNKYRDEARPRAGILRGREFLMKDSYSFDIDDDGLKNAYIAHREAYQRIFDLLKVRYVIVSAVSGAMGGSASEEFLAESDVGEDTYVRCLQSGYAANVEAVVTMVPEPISSEQIAGLASATVHHTGDTPTIATLVDWANGADLGRTVTAADTLKNVMLKVREPGGEWELLGVGVPGDREVDDKRLGAALEPAEYAMLDDADFARYPFLVKGYIGPKALLANGVRYLVDPRVVDGTAWITGADELGKHVVDLVAGRDFTPDGTIEAAEVREGDPSPDGAGPLVAARGIEIGHVFQLGRKYADAFGADVLGENGKPVRLTMGSYGIGVSRLVAVIAEQHHDELGLRWPSTVSPFDVHVVIANKDADARTGATELAAELDRLGVDVLLDDRTASPGVKFKDAELLGVPWIVVVGRGWADGIVELRDRFGGDKHEIPVDGAAERISAALAGA.

This sequence belongs to the class-II aminoacyl-tRNA synthetase family. ProS type 1 subfamily. Homodimer.

The protein resides in the cytoplasm. It carries out the reaction tRNA(Pro) + L-proline + ATP = L-prolyl-tRNA(Pro) + AMP + diphosphate. In terms of biological role, catalyzes the attachment of proline to tRNA(Pro) in a two-step reaction: proline is first activated by ATP to form Pro-AMP and then transferred to the acceptor end of tRNA(Pro). As ProRS can inadvertently accommodate and process non-cognate amino acids such as alanine and cysteine, to avoid such errors it has two additional distinct editing activities against alanine. One activity is designated as 'pretransfer' editing and involves the tRNA(Pro)-independent hydrolysis of activated Ala-AMP. The other activity is designated 'posttransfer' editing and involves deacylation of mischarged Ala-tRNA(Pro). The misacylated Cys-tRNA(Pro) is not edited by ProRS. This chain is Proline--tRNA ligase, found in Mycolicibacterium vanbaalenii (strain DSM 7251 / JCM 13017 / BCRC 16820 / KCTC 9966 / NRRL B-24157 / PYR-1) (Mycobacterium vanbaalenii).